We begin with the raw amino-acid sequence, 276 residues long: Undecaprenyl-diphosphatase (276 aa).

The next 7 helical transmembrane spans lie at 40–60, 98–118, 121–141, 155–175, 200–220, 227–247, and 255–275; these read GLAFDTILHIGTLVAIFTFFW, WLIIVGTIPTGIMGILLKDAI, IFRGTLFVGIFLLVTAAVLYY, MSFKQALIVGICQGLAVFPGI, FLLSIPAVIGAGLIQIKDIAT, VLLAGFISSVIFGYLSIKLLM, and LDIFAYYCTIIGIITIILSVV.

It belongs to the UppP family.

The protein localises to the cell membrane. It catalyses the reaction di-trans,octa-cis-undecaprenyl diphosphate + H2O = di-trans,octa-cis-undecaprenyl phosphate + phosphate + H(+). Functionally, catalyzes the dephosphorylation of undecaprenyl diphosphate (UPP). The protein is Undecaprenyl-diphosphatase of Methanosphaera stadtmanae (strain ATCC 43021 / DSM 3091 / JCM 11832 / MCB-3).